Reading from the N-terminus, the 161-residue chain is Thy-1 membrane glycoprotein (161 aa).

The signal sequence occupies residues 1 to 19 (MNLAISIALLLTVLQVSRG). Q20 is subject to Pyrrolidone carboxylic acid. The region spanning 20 to 126 (QKVTSLTACL…SQNVTVLRDK (107 aa)) is the Ig-like V-type domain. Intrachain disulfides connect C28/C130 and C38/C104. N-linked (GlcNAc...) asparagine glycans are attached at residues N42 and N79. A Phosphoserine modification is found at S82. A glycan (N-linked (GlcNAc...) asparagine) is linked at N119. C130 carries the GPI-anchor amidated cysteine; alternate lipid modification. The propeptide at 131 to 161 (EGISLLAQNTSWLXLLLLSLSLLQATDFMSL) is removed in mature form. The N-linked (GlcNAc...) asparagine glycan is linked to N139.

Its subcellular location is the cell membrane. Its function is as follows. May play a role in cell-cell or cell-ligand interactions during synaptogenesis and other events in the brain. The polypeptide is Thy-1 membrane glycoprotein (THY1) (Macaca mulatta (Rhesus macaque)).